The primary structure comprises 707 residues: Elongation factor G (707 aa).

In terms of domain architecture, tr-type G spans 8–296 (ERYRNFGIMA…AVVDFLPAPT (289 aa)). GTP-binding positions include 17 to 24 (AHIDAGKT), 94 to 98 (DTPGH), and 148 to 151 (NKMD).

The protein belongs to the TRAFAC class translation factor GTPase superfamily. Classic translation factor GTPase family. EF-G/EF-2 subfamily.

It is found in the cytoplasm. In terms of biological role, catalyzes the GTP-dependent ribosomal translocation step during translation elongation. During this step, the ribosome changes from the pre-translocational (PRE) to the post-translocational (POST) state as the newly formed A-site-bound peptidyl-tRNA and P-site-bound deacylated tRNA move to the P and E sites, respectively. Catalyzes the coordinated movement of the two tRNA molecules, the mRNA and conformational changes in the ribosome. This is Elongation factor G from Paracoccus denitrificans (strain Pd 1222).